Reading from the N-terminus, the 69-residue chain is Consomatin Be1 (69 aa).

Positions 1 to 22 (MEMAYWVMVMMMVWITAPLSEG) are cleaved as a signal peptide. Positions 23–57 (GKLNDVIRALAPDDVTPQFILRSLISRRRSDSDVR) are excised as a propeptide. Glu-58 bears the 4-carboxyglutamate mark. Cys-62 and Cys-67 are disulfide-bonded. Trp-64 is modified (D-tryptophan). 2 positions are modified to 4-hydroxyproline: Pro-68 and Pro-69.

Belongs to the conotoxin C superfamily. Consomatin family. Expressed by the venom duct.

It localises to the secreted. In terms of biological role, moderately activates human somatostatin receptors (SSTR) with a preferential activation of SSTR1 and SSTR4. In vivo, does not cause behavioral changes in mice within a few minutes of intracranial injection, but causes a progressive loss of movement thereafter. Four to five hours after injection, mice recover, even with the highest dose tested. Shows antinociception and antihyperalgesia activities in two mouse models of acute pain, most probably by acting outside the central nervous system. The chain is Consomatin Be1 from Conus betulinus (Beech cone).